Reading from the N-terminus, the 428-residue chain is Adenylosuccinate synthetase (428 aa).

Residues 12 to 18 and 40 to 42 contribute to the GTP site; these read GDEGKGK and GHT. Catalysis depends on Asp-13, which acts as the Proton acceptor. Mg(2+) contacts are provided by Asp-13 and Gly-40. Residues 13–16, 38–41, Thr-130, Arg-144, Gln-225, Thr-240, and Arg-304 each bind IMP; these read DEGK and NAGH. Catalysis depends on His-41, which acts as the Proton donor. Position 300–306 (300–306) interacts with substrate; that stretch reads VTTGRAR. GTP is bound by residues Arg-306, 332-334, and 414-416; these read KID and SVG.

Belongs to the adenylosuccinate synthetase family. Homodimer. Mg(2+) is required as a cofactor.

It localises to the cytoplasm. It carries out the reaction IMP + L-aspartate + GTP = N(6)-(1,2-dicarboxyethyl)-AMP + GDP + phosphate + 2 H(+). It participates in purine metabolism; AMP biosynthesis via de novo pathway; AMP from IMP: step 1/2. Plays an important role in the de novo pathway of purine nucleotide biosynthesis. Catalyzes the first committed step in the biosynthesis of AMP from IMP. The chain is Adenylosuccinate synthetase from Clostridium botulinum (strain 657 / Type Ba4).